The sequence spans 238 residues: Ubiquinone/menaquinone biosynthesis C-methyltransferase UbiE (238 aa).

The S-adenosyl-L-methionine site is built by threonine 62 and aspartate 82.

It belongs to the class I-like SAM-binding methyltransferase superfamily. MenG/UbiE family.

The catalysed reaction is a 2-demethylmenaquinol + S-adenosyl-L-methionine = a menaquinol + S-adenosyl-L-homocysteine + H(+). The enzyme catalyses a 2-methoxy-6-(all-trans-polyprenyl)benzene-1,4-diol + S-adenosyl-L-methionine = a 5-methoxy-2-methyl-3-(all-trans-polyprenyl)benzene-1,4-diol + S-adenosyl-L-homocysteine + H(+). It participates in quinol/quinone metabolism; menaquinone biosynthesis; menaquinol from 1,4-dihydroxy-2-naphthoate: step 2/2. The protein operates within cofactor biosynthesis; ubiquinone biosynthesis. In terms of biological role, methyltransferase required for the conversion of demethylmenaquinol (DMKH2) to menaquinol (MKH2) and the conversion of 2-polyprenyl-6-methoxy-1,4-benzoquinol (DDMQH2) to 2-polyprenyl-3-methyl-6-methoxy-1,4-benzoquinol (DMQH2). The sequence is that of Ubiquinone/menaquinone biosynthesis C-methyltransferase UbiE from Wolbachia pipientis wMel.